A 200-amino-acid chain; its full sequence is Holliday junction branch migration complex subunit RuvA (200 aa).

Positions 1-64 (MYAYFRGRVV…EDALQLYGFS (64 aa)) are domain I. The interval 65 to 143 (SEEEKQLFRL…KLSPPGAAAT (79 aa)) is domain II. The flexible linker stretch occupies residues 144 to 154 (PAGAVQCGIRE). The segment at 154-200 (EDATNALLTLGFSRTAAQQAVAGVLEANPGGSVEDVVKSALLAMHNR) is domain III.

The protein belongs to the RuvA family. Homotetramer. Forms an RuvA(8)-RuvB(12)-Holliday junction (HJ) complex. HJ DNA is sandwiched between 2 RuvA tetramers; dsDNA enters through RuvA and exits via RuvB. An RuvB hexamer assembles on each DNA strand where it exits the tetramer. Each RuvB hexamer is contacted by two RuvA subunits (via domain III) on 2 adjacent RuvB subunits; this complex drives branch migration. In the full resolvosome a probable DNA-RuvA(4)-RuvB(12)-RuvC(2) complex forms which resolves the HJ.

The protein localises to the cytoplasm. Functionally, the RuvA-RuvB-RuvC complex processes Holliday junction (HJ) DNA during genetic recombination and DNA repair, while the RuvA-RuvB complex plays an important role in the rescue of blocked DNA replication forks via replication fork reversal (RFR). RuvA specifically binds to HJ cruciform DNA, conferring on it an open structure. The RuvB hexamer acts as an ATP-dependent pump, pulling dsDNA into and through the RuvAB complex. HJ branch migration allows RuvC to scan DNA until it finds its consensus sequence, where it cleaves and resolves the cruciform DNA. The protein is Holliday junction branch migration complex subunit RuvA of Chlorobium luteolum (strain DSM 273 / BCRC 81028 / 2530) (Pelodictyon luteolum).